Consider the following 649-residue polypeptide: Endoplasmic reticulum chaperone BiP (649 aa).

Residues 1–20 (MGLSTYVGTFLLCILTLSHC) form the signal peptide. ATP contacts are provided by residues 36–39 (GTTY), Lys96, 226–228 (GGT), 292–299 (EKAKRTLS), and 363–366 (GSTR). The segment at 125 to 279 (KPYMKVQVGS…KKKEGKDITK (155 aa)) is nucleotide-binding (NBD). A substrate-binding (SBD) region spans residues 399 to 499 (VQAGVISGVE…PRGLPQIEVT (101 aa)). Residues 646-649 (KEEL) carry the Prevents secretion from ER motif.

Belongs to the heat shock protein 70 family.

The protein localises to the endoplasmic reticulum lumen. It carries out the reaction ATP + H2O = ADP + phosphate + H(+). The chaperone activity is regulated by ATP-induced allosteric coupling of the nucleotide-binding (NBD) and substrate-binding (SBD) domains. In the ADP-bound and nucleotide-free (apo) states, the two domains have little interaction. In contrast, in the ATP-bound state the two domains are tightly coupled, which results in drastically accelerated kinetics in both binding and release of polypeptide substrates. J domain-containing co-chaperones stimulate the ATPase activity and are required for efficient substrate recognition. Functionally, endoplasmic reticulum chaperone that plays a key role in protein folding and quality control in the endoplasmic reticulum lumen. Involved in the correct folding of proteins and degradation of misfolded proteins. Acts as a key repressor of the unfolded protein response (UPR). This is Endoplasmic reticulum chaperone BiP from Echinococcus multilocularis (Fox tapeworm).